Reading from the N-terminus, the 117-residue chain is Large ribosomal subunit protein uL18 (117 aa).

The protein belongs to the universal ribosomal protein uL18 family. As to quaternary structure, part of the 50S ribosomal subunit; part of the 5S rRNA/L5/L18/L25 subcomplex. Contacts the 5S and 23S rRNAs.

Its function is as follows. This is one of the proteins that bind and probably mediate the attachment of the 5S RNA into the large ribosomal subunit, where it forms part of the central protuberance. In Onion yellows phytoplasma (strain OY-M), this protein is Large ribosomal subunit protein uL18.